The following is a 110-amino-acid chain: Heat shock protein Hsp-12.2 (110 aa).

Residues 15-110 enclose the sHSP domain; it reads DWPLQHNDGV…VLTITASKKA (96 aa).

Belongs to the small heat shock protein (HSP20) family.

In Caenorhabditis elegans, this protein is Heat shock protein Hsp-12.2 (hsp-12.2).